The following is a 109-amino-acid chain: ATP synthase subunit c (109 aa).

A run of 2 helical transmembrane segments spans residues 42 to 62 and 88 to 108; these read YIGT…QGFS and LALA…IIFV.

Belongs to the ATPase C chain family. In terms of assembly, F-type ATPases have 2 components, F(1) - the catalytic core - and F(0) - the membrane proton channel. F(1) has five subunits: alpha(3), beta(3), gamma(1), delta(1), epsilon(1). F(0) has three main subunits: a(1), b(2) and c(10-14). The alpha and beta chains form an alternating ring which encloses part of the gamma chain. F(1) is attached to F(0) by a central stalk formed by the gamma and epsilon chains, while a peripheral stalk is formed by the delta and b chains.

It is found in the cell membrane. In terms of biological role, f(1)F(0) ATP synthase produces ATP from ADP in the presence of a proton or sodium gradient. F-type ATPases consist of two structural domains, F(1) containing the extramembraneous catalytic core and F(0) containing the membrane proton channel, linked together by a central stalk and a peripheral stalk. During catalysis, ATP synthesis in the catalytic domain of F(1) is coupled via a rotary mechanism of the central stalk subunits to proton translocation. Key component of the F(0) channel; it plays a direct role in translocation across the membrane. A homomeric c-ring of between 10-14 subunits forms the central stalk rotor element with the F(1) delta and epsilon subunits. This Ureaplasma parvum serovar 3 (strain ATCC 27815 / 27 / NCTC 11736) protein is ATP synthase subunit c.